Here is a 1035-residue protein sequence, read N- to C-terminus: Sulfite reductase [NADPH] flavoprotein component (1035 aa).

The FAD-binding FR-type domain maps to 648–879 (VKNFVVKVKE…VKPSVMKLPP (232 aa)). Residues 684-695 (YDIGEALGIHAR) and 814-824 (LKRREYSIASS) contribute to the FAD site.

FAD serves as cofactor. Requires FMN as cofactor.

It carries out the reaction hydrogen sulfide + 3 NADP(+) + 3 H2O = sulfite + 3 NADPH + 4 H(+). The protein operates within sulfur metabolism; hydrogen sulfide biosynthesis; hydrogen sulfide from sulfite (NADPH route): step 1/1. Its function is as follows. This enzyme catalyzes the 6-electron reduction of sulfite to sulfide. This is one of several activities required for the biosynthesis of L-cysteine from sulfate. This Saccharomyces cerevisiae (strain ATCC 204508 / S288c) (Baker's yeast) protein is Sulfite reductase [NADPH] flavoprotein component (MET10).